The chain runs to 347 residues: Protein RecA (347 aa).

64 to 71 (GPESSGKT) is an ATP binding site.

This sequence belongs to the RecA family.

It localises to the cytoplasm. Functionally, can catalyze the hydrolysis of ATP in the presence of single-stranded DNA, the ATP-dependent uptake of single-stranded DNA by duplex DNA, and the ATP-dependent hybridization of homologous single-stranded DNAs. It interacts with LexA causing its activation and leading to its autocatalytic cleavage. The protein is Protein RecA of Bacillus velezensis (strain DSM 23117 / BGSC 10A6 / LMG 26770 / FZB42) (Bacillus amyloliquefaciens subsp. plantarum).